A 369-amino-acid chain; its full sequence is 3-dehydroquinate synthase (369 aa).

NAD(+) contacts are provided by residues 78 to 83 (DGERYK), 112 to 116 (GVIGD), 136 to 137 (TT), Lys149, Lys158, and 176 to 179 (TLTT). Positions 191, 254, and 271 each coordinate Zn(2+).

Belongs to the sugar phosphate cyclases superfamily. Dehydroquinate synthase family. NAD(+) serves as cofactor. Co(2+) is required as a cofactor. The cofactor is Zn(2+).

The protein localises to the cytoplasm. It catalyses the reaction 7-phospho-2-dehydro-3-deoxy-D-arabino-heptonate = 3-dehydroquinate + phosphate. Its pathway is metabolic intermediate biosynthesis; chorismate biosynthesis; chorismate from D-erythrose 4-phosphate and phosphoenolpyruvate: step 2/7. In terms of biological role, catalyzes the conversion of 3-deoxy-D-arabino-heptulosonate 7-phosphate (DAHP) to dehydroquinate (DHQ). This Nitrosomonas europaea (strain ATCC 19718 / CIP 103999 / KCTC 2705 / NBRC 14298) protein is 3-dehydroquinate synthase.